Here is a 203-residue protein sequence, read N- to C-terminus: Glutathione S-transferase 2 (203 aa).

A GST N-terminal domain is found at 1–78 (MPKVVFHYFG…YLGRKYGLAG (78 aa)). Glutathione contacts are provided by residues tyrosine 8, tryptophan 38, lysine 42, 48-50 (GQM), and 62-63 (QS). Residues 80 to 203 (DIEEDFEIDQ…YLDSAPKKEF (124 aa)) enclose the GST C-terminal domain.

This sequence belongs to the GST superfamily. Sigma family. In terms of assembly, homodimer.

It carries out the reaction RX + glutathione = an S-substituted glutathione + a halide anion + H(+). Its function is as follows. Conjugation of reduced glutathione to a wide number of exogenous and endogenous hydrophobic electrophiles. This chain is Glutathione S-transferase 2 (GST2), found in Manduca sexta (Tobacco hawkmoth).